Consider the following 405-residue polypeptide: Eukaryotic translation initiation factor 5 (405 aa).

Residue 27 to 34 participates in GTP binding; the sequence is GRGNGIKT. The disordered stretch occupies residues 143–202; the sequence is NPPDSVSGSKKKKKAATASANVRGGGLSISDIAQGKSQNAPSDGTGSSTPQHHDEDEDEL. 2 positions are modified to phosphoserine: Ser170 and Ser172. Residues 177 to 192 are compositionally biased toward polar residues; the sequence is GKSQNAPSDGTGSSTP. Residue Thr191 is modified to Phosphothreonine. Phosphoserine is present on Ser228. In terms of domain architecture, W2 spans 241–402; that stretch reads VNSELTQLDE…ETAESDDDEE (162 aa). Thr317 carries the phosphothreonine modification. Ser397 carries the phosphoserine modification.

Belongs to the eIF-2-beta/eIF-5 family. Monomer. The factors eIF-1, eIF-2, eIF-3, TIF5/eIF-5 and methionyl-tRNAi form a multifactor complex (MFC) that may bind to the 40S ribosome. TIF32, NIP1 and TIF5/eIF-5 comprise a minimal 40S-ribosome-binding unit. Interacts with NIP1. Interacts with SUI3.

Catalyzes the hydrolysis of GTP bound to the 40S ribosomal initiation complex (40S.mRNA.Met-tRNA[F].eIF-2.GTP) with the subsequent joining of a 60S ribosomal subunit resulting in the release of eIF-2 and the guanine nucleotide. The subsequent joining of a 60S ribosomal subunit results in the formation of a functional 80S initiation complex (80S.mRNA.Met-tRNA[F]). eIF-5 is essential for cell viability. In Saccharomyces cerevisiae (strain ATCC 204508 / S288c) (Baker's yeast), this protein is Eukaryotic translation initiation factor 5 (TIF5).